The sequence spans 106 residues: MVYQVKDKADLDGQLTKASGKLVVLDFFATWCGPCKMISPKLVELSTQFADNVVVLKVDVDECEDIAMEYNISSMPTFVFLKNGVKVEEFAGANAKRLEDVIKANI.

The region spanning 1 to 106 (MVYQVKDKAD…RLEDVIKANI (106 aa)) is the Thioredoxin domain. Catalysis depends on nucleophile residues C32 and C35. C32 and C35 are joined by a disulfide.

It belongs to the thioredoxin family. In terms of assembly, monomer.

Its function is as follows. Participates in various redox reactions through the reversible oxidation of its active center dithiol to a disulfide and catalyzes dithiol-disulfide exchange reactions. As a reducing substrate of peroxiredoxin 1, thioredoxin 2 is preferred over thioredoxin 1. This Drosophila melanogaster (Fruit fly) protein is Thioredoxin-2.